Consider the following 142-residue polypeptide: Type 3 secretion system pilotin (142 aa).

The first 23 residues, 1-23, serve as a signal peptide directing secretion; it reads MIRHGSNKLKIFILSILLLTLSG. Cysteine 24 is lipidated: N-palmitoyl cysteine. Cysteine 24 carries S-diacylglycerol cysteine lipidation.

This sequence belongs to the MxiM family. As to quaternary structure, monomer. Interacts with the secretin MxiD/SctC.

Its subcellular location is the cell outer membrane. Functionally, involved in the synthesis of the type III secretion system (T3SS), also called injectisome, which is used to inject bacterial effector proteins into eukaryotic host cells. Pilot protein that is required for the proper localization of the secretin MxiD/SctC in the outer membrane. Also influences both MxiD/SctC multimerization and stability. Required for both Ipa translocation and tissue culture cell invasion. Binds lipids. The chain is Type 3 secretion system pilotin from Shigella flexneri.